Consider the following 359-residue polypeptide: MDKIFEQLDGLLDRYEELQELMSDPEVISDTKRYLALSKEEGGMRDVVAAYKKYKQVLSDIKESEEVLRESKDDDMEALAKEDLEDLQKQKADLEDQIKVLMLPKDPNDDKNIIMEIRGAAGGDEASLFAGDLLNMYMHYAERQGWKTEIIDATPTEVGGYKEVVVMITGDNVYSKLKYENGAHRVQRVPVTESAGRVHTSTATVGVMPEYDEVDLKIDPKDIRTDVYRSSGAGGQHVNKTSSAVRMTHIPSGIVVSMQDERSQQENRARAMQILRSRVYDYYETQNQEKYDQNRKNAIGTGDRSERIRTYNYPQNRVTDHRIGLTLNKLDRIMNGELDEIIDALIVHDQAQKMESLNV.

N5-methylglutamine is present on Gln-236.

The protein belongs to the prokaryotic/mitochondrial release factor family. Post-translationally, methylated by PrmC. Methylation increases the termination efficiency of RF1.

The protein localises to the cytoplasm. Peptide chain release factor 1 directs the termination of translation in response to the peptide chain termination codons UAG and UAA. This Lacticaseibacillus casei (strain BL23) (Lactobacillus casei) protein is Peptide chain release factor 1.